A 283-amino-acid polypeptide reads, in one-letter code: Co-chaperone protein DjlA (283 aa).

Topologically, residues 1–6 (MQIFGK) are periplasmic. A helical transmembrane segment spans residues 7–30 (ILGGFFGFLFGGFFGAALGIFIGH). Residues 31 to 283 (QFDKAKRMAN…DLIKKEKGIK (253 aa)) are Cytoplasmic-facing. Positions 188-197 (QGGGFSGHQS) are enriched in gly residues. The tract at residues 188–210 (QGGGFSGHQSGGSHQQGQWQQAS) is disordered. Over residues 198-210 (GGSHQQGQWQQAS) the composition is skewed to low complexity. Residues 217–283 (DAYNLLGISE…DLIKKEKGIK (67 aa)) enclose the J domain.

In terms of assembly, homodimer.

The protein localises to the cell inner membrane. In terms of biological role, regulatory DnaK co-chaperone. Direct interaction between DnaK and DjlA is needed for the induction of the wcaABCDE operon, involved in the synthesis of a colanic acid polysaccharide capsule, possibly through activation of the RcsB/RcsC phosphotransfer signaling pathway. The colanic acid capsule may help the bacterium survive conditions outside the host. The chain is Co-chaperone protein DjlA from Aliivibrio fischeri (strain ATCC 700601 / ES114) (Vibrio fischeri).